Reading from the N-terminus, the 2513-residue chain is Polyprotein P1234 (2513 aa).

The Alphavirus-like MT domain maps to 28–259; the sequence is EPKQVTPNDH…ESRKLLQSWH (232 aa). The tract at residues 244–263 is nsP1 membrane-binding; that stretch reads GSTLYPESRKLLQSWHLPSV. Residues C417 and C419 are each lipidated (S-palmitoyl cysteine; by host). A (+)RNA virus helicase ATP-binding domain is found at 690–842; it reads DLTSPPYHEF…HNICTQVYHK (153 aa). Residue 721–728 participates in a ribonucleoside 5'-triphosphate binding; sequence GVPGSGKS. The region spanning 843 to 991 is the (+)RNA virus helicase C-terminal domain; it reads SISRRCTLPV…IKEWEAEHAS (149 aa). The Peptidase C9 domain maps to 1004 to 1327; that stretch reads DTFQNKANVC…NQLNAVYAGL (324 aa). A nucleolus localization signal region spans residues 1005–1024; it reads TFQNKANVCWAKCLVPILDT. Residue C1013 is the For cysteine protease nsP2 activity of the active site. A Nuclear export signal motif is present at residues 1058–1067; sequence TRIYGVDLDS. The active-site For cysteine protease nsP2 activity is H1083. Residues 1182–1186 carry the Nuclear localization signal motif; that stretch reads PTKRV. ADP-D-ribose contacts are provided by D1343, N1357, G1365, G1445, V1446, and Y1447. Residues C1595, C1597, C1620, and C1638 each coordinate Zn(2+). 2 consecutive short sequence motifs (FGDF; binding to host G3BP1) follow at residues 1851–1854 and 1869–1872; these read FGDF. Residues 2267–2382 form the RdRp catalytic domain; that stretch reads DAVLETDIAS…HGVVSDALMA (116 aa).

Interacts with non-structural protein 3. Interacts with RNA-directed RNA polymerase nsP4. Interacts with protease nsP2. interacts with itself. In terms of assembly, interacts with mRNA-capping enzyme nsP1. Interacts with host DDX1. Interacts with host DDX3. Interacts (via C-terminus) with host G3BP1; this interaction inhibits the formation of host stress granules on viral mRNAs and the nsp3-G3BP1 complexes bind viral RNAs and probably orchestrate the assembly of viral replication complexes. Interacts (via C-terminus) with host G3BP2; this interaction inhibits the formation of host stress granules on viral mRNAs and the nsp3-G3BP2 complexes bind viral RNAs and probably orchestrate the assembly of viral replication complexes. As to quaternary structure, interacts with mRNA-capping enzyme nsP1. Interacts with protease nsP2. interacts with itself. Interacts with RNA-directed RNA polymerase nsP4. Interacts with mRNA-capping enzyme nsP1. Interacts with KPNA1/karyopherin-alpha1; this interaction probably allows the active transport of protease nsP2 into the host nucleus. The cofactor is Mg(2+). It depends on Mn(2+) as a cofactor. In terms of processing, specific enzymatic cleavages in vivo yield mature proteins. The processing of the polyprotein is temporally regulated. In early stages (1.7 hpi), P1234 is first cleaved in trans through its nsP2 protease activity, releasing P123' and nsP4, which associate to form the early replication complex. At the same time, P1234 is also cut at the nsP1/nsP2 site early in infection but with lower efficiency. After replication of the viral minus-strand RNAs (4 hpi), the polyproteins are cut at the nsP1/nsP2 and nsP2/nsP3 sites very efficiently, preventing accumulation of P123' and P1234 and allowing the formation of the late replication complex. NsP3'/nsP4 site is not cleaved anymore and P34 is produced rather than nsP4. Specific enzymatic cleavages in vivo yield mature proteins. The processing of the polyprotein is temporally regulated. In early stages (1.7 hpi), P123 is cleaved at the nsP1/nsP2 site with low efficiency. After replication of the viral minus-strand RNAs (4 hpi), the polyproteins are cut at the nsP1/nsP2 and nsP2/nsP3 sites very efficiently, preventing accumulation of P123 and allowing the formation of the late replication complex. Post-translationally, specific enzymatic cleavages in vivo yield mature proteins. The processing of the polyprotein is temporally regulated. In early stages (1.7 hpi), P123 is cleaved at the nsP1/nsP2 site with low efficiency. After replication of the viral minus-strand RNAs (4 hpi), the polyproteins are cut at the nsP1/nsP2 and nsP2/nsP3 sites very efficiently, preventing accumulation of P123' and allowing the formation of the late replication complex. In terms of processing, palmitoylated by host palmitoyltransferases ZDHHC2 and ZDHHC19. Phosphorylated by host on serines and threonines. Post-translationally, ubiquitinated; targets the protein for rapid degradation via the ubiquitin system. Nsp4 is present in extremely low quantities due to low frequency of translation through the amber stop-codon and the degradation by the ubiquitin pathway.

The protein localises to the host cytoplasmic vesicle membrane. The protein resides in the host cell membrane. Its subcellular location is the host cell projection. It localises to the host filopodium. It is found in the host nucleus. The protein localises to the host cytoplasm. The catalysed reaction is GTP + S-adenosyl-L-methionine = N(7)-methyl-GTP + S-adenosyl-L-homocysteine. It catalyses the reaction N(7)-methyl-GTP + L-histidyl-[protein] = N(tele)-(N(7)-methylguanosine 5'-phospho)-L-histidyl-[protein] + diphosphate. The enzyme catalyses N(tele)-(N(7)-methylguanosine 5'-phospho)-L-histidyl-[protein] + a 5'-end diphospho-(purine-ribonucleoside) in mRNA + H(+) = a 5'-end (N(7)-methyl 5'-triphosphoguanosine)-(purine-ribonucleoside) in mRNA + L-histidyl-[protein]. It carries out the reaction a 5'-end triphospho-ribonucleoside in mRNA + H2O = a 5'-end diphospho-ribonucleoside in mRNA + phosphate + H(+). The catalysed reaction is a ribonucleoside 5'-triphosphate + H2O = a ribonucleoside 5'-diphosphate + phosphate + H(+). It catalyses the reaction ATP + H2O = ADP + phosphate + H(+). The enzyme catalyses RNA(n) + a ribonucleoside 5'-triphosphate = RNA(n+1) + diphosphate. It carries out the reaction 4-O-(ADP-D-ribosyl)-L-aspartyl-[protein] + H2O = L-aspartyl-[protein] + ADP-D-ribose + H(+). The catalysed reaction is 5-O-(ADP-D-ribosyl)-L-glutamyl-[protein] + H2O = L-glutamyl-[protein] + ADP-D-ribose + H(+). It catalyses the reaction RNA(n) + ATP = RNA(n)-3'-adenine ribonucleotide + diphosphate. The enzyme catalyses ADP-alpha-D-ribose 1''-phosphate + H2O = ADP-D-ribose + phosphate. In terms of biological role, inactive precursor of the viral replicase, which is activated by cleavages carried out by the viral protease nsP2. The early replication complex formed by the polyprotein P123' and nsP4 synthesizes minus-strand RNAs. Polyprotein P123' is a short-lived polyprotein that accumulates during early stage of infection. As soon P123' is cleaved into mature proteins, the plus-strand RNAs synthesis begins. Functionally, the early replication complex formed by the polyprotein P123 and nsP4 synthesizes minus-strand RNAs. As soon P123 is cleaved into mature proteins, the plus-strand RNAs synthesis begins. Its function is as follows. Cytoplasmic capping enzyme that catalyzes two virus-specific reactions: methyltransferase and nsP1 guanylyltransferase. mRNA-capping is necessary since all viral RNAs are synthesized in the cytoplasm, and host capping enzymes are restricted to the nucleus. The enzymatic reaction involves a covalent link between 7-methyl-GMP and nsP1, whereas eukaryotic capping enzymes form a covalent complex only with GMP. nsP1 capping consists in the following reactions: GTP is first methylated into 7-methyl-GMP and then is covalently linked to nsP1 to form the m7GMp-nsP1 complex from which 7-methyl-GMP complex is transferred to the mRNA to create the cap structure. NsP1 is also needed for the initiation of the minus-strand RNAs synthesis. Probably serves as a membrane anchor for the replication complex composed of nsP1-nsP4. Palmitoylated nsP1 is remodeling host cell cytoskeleton, and induces filopodium-like structure formation at the surface of the host cell. In terms of biological role, multifunctional protein whose N-terminus is part of the RNA polymerase complex and displays NTPase, RNA triphosphatase and helicase activities. NTPase and RNA triphosphatase are involved in viral RNA capping and helicase keeps a check on the dsRNA replication intermediates. The C-terminus harbors a protease that specifically cleaves the polyproteins and releases the mature proteins. Required for the shutoff of minus-strand RNAs synthesis. Specifically inhibits the host IFN response by promoting the nuclear export of host STAT1. Also inhibits host transcription by inducing the rapid proteasome-dependent degradation of POLR2A, a catalytic subunit of the RNAPII complex. The resulting inhibition of cellular protein synthesis serves to ensure maximal viral gene expression and to evade host immune response. Seems to be essential for minus-strand RNAs and subgenomic 26S mRNAs synthesis. Displays mono-ADP-ribosylhydrolase activity. ADP-ribosylation is a post-translational modification that controls various processes of the host cell and the virus probably needs to revert it for optimal viral replication. Binds proteins of FXR family and sequesters them into the viral RNA replication complexes thereby inhibiting the formation of host stress granules on viral mRNAs. The nsp3'-FXR complexes bind viral RNAs and probably orchestrate the assembly of viral replication complexes, thanks to the ability of FXR family members to self-assemble and bind DNA. Functionally, seems to be essential for minus-strand RNAs and subgenomic 26S mRNAs synthesis. Displays mono-ADP-ribosylhydrolase activity. ADP-ribosylation is a post-translational modification that controls various processes of the host cell and the virus probably needs to revert it for optimal viral replication. Binds proteins of G3BP family and sequesters them into the viral RNA replication complexes thereby inhibiting the formation of host stress granules on viral mRNAs. The nsp3-G3BP complexes bind viral RNAs and probably orchestrate the assembly of viral replication complexes, thanks to the ability of G3BP family members to self-assemble and bind DNA. Its function is as follows. RNA dependent RNA polymerase. Replicates genomic and antigenomic RNA by recognizing replications specific signals. The early replication complex formed by the polyprotein P123 and nsP4 synthesizes minus-strand RNAs. The late replication complex composed of fully processed nsP1-nsP4 is responsible for the production of genomic and subgenomic plus-strand RNAs. This is Polyprotein P1234 from Anopheles (Human).